A 707-amino-acid polypeptide reads, in one-letter code: Translation initiation factor eIF2B subunit epsilon (707 aa).

Disordered regions lie at residues 489 to 526 (HDDI…SVKF) and 686 to 707 (AEEE…DESD). The region spanning 516–693 (DNPIEPDSVK…KSAEEESDDS (178 aa)) is the W2 domain. A compositionally biased stretch (acidic residues) spans 688 to 707 (EESDDSDDSDDDDDDSDESD).

It belongs to the eIF-2B gamma/epsilon subunits family. Component of the translation initiation factor 2B (eIF2B) complex which is a heterodecamer of two sets of five different subunits: alpha, beta, gamma, delta and epsilon. Subunits alpha, beta and delta comprise a regulatory subcomplex and subunits epsilon and gamma comprise a catalytic subcomplex. Within the complex, the hexameric regulatory complex resides at the center, with the two heterodimeric catalytic subcomplexes bound on opposite sides.

It localises to the cytoplasm. Its subcellular location is the cytosol. Its function is as follows. Acts as a component of the translation initiation factor 2B (eIF2B) complex, which catalyzes the exchange of GDP for GTP on eukaryotic initiation factor 2 (eIF2) gamma subunit. Its guanine nucleotide exchange factor activity is repressed when bound to eIF2 complex phosphorylated on the alpha subunit, thereby limiting the amount of methionyl-initiator methionine tRNA available to the ribosome and consequently global translation is repressed. This is Translation initiation factor eIF2B subunit epsilon (eif2b5) from Dictyostelium discoideum (Social amoeba).